Consider the following 156-residue polypeptide: MTIMLTPMQTEEFRSYLTYTTKHYAEEKVKAGTWLPEDAQLLSKQVFTDLLPRGLETPHHHLWSLKLNEKDIVGWLWIHAEPEHPQQEAFIYDFGLYEPYRGKGYAKQALAALDQAARSMGIRKLSLHVFAHNQTARKLYEQTGFQETDVVMSKKL.

Residues 11 to 156 form the N-acetyltransferase domain; that stretch reads EEFRSYLTYT…ETDVVMSKKL (146 aa).

The protein belongs to the acetyltransferase family. In terms of assembly, homodimer.

This is an uncharacterized protein from Bacillus subtilis (strain 168).